A 124-amino-acid chain; its full sequence is Glutaredoxin-2 (124 aa).

Cys-13 and Cys-16 are joined by a disulfide.

The protein belongs to the glutaredoxin family. In terms of assembly, homodimer.

It localises to the host cytoplasm. Glutaredoxin necessary for virion morphogenesis and virus replication. Functions as a thiol-disulfide transfer protein between membrane-associated OPG128 and substrates OPG095 or OPG053. The complete pathway for formation of disulfide bonds in intracellular virion membrane proteins sequentially involves oxidation of OPG072, OPG128 and OPG088. Exhibit thioltransferase and dehydroascorbate reductase activities in vitro. The protein is Glutaredoxin-2 (OPG088) of Homo sapiens (Human).